A 167-amino-acid polypeptide reads, in one-letter code: Endoribonuclease YbeY (167 aa).

Zn(2+) is bound by residues histidine 126, histidine 130, and histidine 136.

It belongs to the endoribonuclease YbeY family. Requires Zn(2+) as cofactor.

Its subcellular location is the cytoplasm. In terms of biological role, single strand-specific metallo-endoribonuclease involved in late-stage 70S ribosome quality control and in maturation of the 3' terminus of the 16S rRNA. In Novosphingobium aromaticivorans (strain ATCC 700278 / DSM 12444 / CCUG 56034 / CIP 105152 / NBRC 16084 / F199), this protein is Endoribonuclease YbeY.